Reading from the N-terminus, the 313-residue chain is 4-hydroxy-3-methylbut-2-enyl diphosphate reductase (313 aa).

Cysteine 12 is a binding site for [4Fe-4S] cluster. The (2E)-4-hydroxy-3-methylbut-2-enyl diphosphate site is built by histidine 41 and histidine 74. Residues histidine 41 and histidine 74 each contribute to the dimethylallyl diphosphate site. The isopentenyl diphosphate site is built by histidine 41 and histidine 74. [4Fe-4S] cluster is bound at residue cysteine 96. Histidine 124 contributes to the (2E)-4-hydroxy-3-methylbut-2-enyl diphosphate binding site. Histidine 124 contacts dimethylallyl diphosphate. Histidine 124 contributes to the isopentenyl diphosphate binding site. Glutamate 126 serves as the catalytic Proton donor. Residue threonine 167 coordinates (2E)-4-hydroxy-3-methylbut-2-enyl diphosphate. Cysteine 197 serves as a coordination point for [4Fe-4S] cluster. The (2E)-4-hydroxy-3-methylbut-2-enyl diphosphate site is built by serine 225, serine 226, asparagine 227, and serine 269. The dimethylallyl diphosphate site is built by serine 225, serine 226, asparagine 227, and serine 269. The isopentenyl diphosphate site is built by serine 225, serine 226, asparagine 227, and serine 269.

It belongs to the IspH family. [4Fe-4S] cluster serves as cofactor.

The catalysed reaction is isopentenyl diphosphate + 2 oxidized [2Fe-2S]-[ferredoxin] + H2O = (2E)-4-hydroxy-3-methylbut-2-enyl diphosphate + 2 reduced [2Fe-2S]-[ferredoxin] + 2 H(+). The enzyme catalyses dimethylallyl diphosphate + 2 oxidized [2Fe-2S]-[ferredoxin] + H2O = (2E)-4-hydroxy-3-methylbut-2-enyl diphosphate + 2 reduced [2Fe-2S]-[ferredoxin] + 2 H(+). The protein operates within isoprenoid biosynthesis; dimethylallyl diphosphate biosynthesis; dimethylallyl diphosphate from (2E)-4-hydroxy-3-methylbutenyl diphosphate: step 1/1. Its pathway is isoprenoid biosynthesis; isopentenyl diphosphate biosynthesis via DXP pathway; isopentenyl diphosphate from 1-deoxy-D-xylulose 5-phosphate: step 6/6. Catalyzes the conversion of 1-hydroxy-2-methyl-2-(E)-butenyl 4-diphosphate (HMBPP) into a mixture of isopentenyl diphosphate (IPP) and dimethylallyl diphosphate (DMAPP). Acts in the terminal step of the DOXP/MEP pathway for isoprenoid precursor biosynthesis. This Baumannia cicadellinicola subsp. Homalodisca coagulata protein is 4-hydroxy-3-methylbut-2-enyl diphosphate reductase.